The following is a 234-amino-acid chain: Ubiquinone biosynthesis O-methyltransferase (234 aa).

The S-adenosyl-L-methionine site is built by Arg-36, Gly-56, Asp-77, and Met-125.

Belongs to the methyltransferase superfamily. UbiG/COQ3 family.

It catalyses the reaction a 3-demethylubiquinol + S-adenosyl-L-methionine = a ubiquinol + S-adenosyl-L-homocysteine + H(+). The catalysed reaction is a 3-(all-trans-polyprenyl)benzene-1,2-diol + S-adenosyl-L-methionine = a 2-methoxy-6-(all-trans-polyprenyl)phenol + S-adenosyl-L-homocysteine + H(+). It functions in the pathway cofactor biosynthesis; ubiquinone biosynthesis. In terms of biological role, O-methyltransferase that catalyzes the 2 O-methylation steps in the ubiquinone biosynthetic pathway. This is Ubiquinone biosynthesis O-methyltransferase from Actinobacillus pleuropneumoniae serotype 5b (strain L20).